Consider the following 197-residue polypeptide: Phosphoheptose isomerase (197 aa).

The SIS domain occupies Met-34 to Gln-196. Asn-49–Gly-51 is a substrate binding site. His-58 and Glu-62 together coordinate Zn(2+). Substrate is bound by residues Glu-62, Asn-91 to Asp-92, Ser-117 to Ser-119, Ser-122, and Gln-172. Residues Gln-172 and His-180 each coordinate Zn(2+).

The protein belongs to the SIS family. GmhA subfamily. Homotetramer. Zn(2+) is required as a cofactor.

It localises to the cytoplasm. It catalyses the reaction 2 D-sedoheptulose 7-phosphate = D-glycero-alpha-D-manno-heptose 7-phosphate + D-glycero-beta-D-manno-heptose 7-phosphate. Its pathway is carbohydrate biosynthesis; D-glycero-D-manno-heptose 7-phosphate biosynthesis; D-glycero-alpha-D-manno-heptose 7-phosphate and D-glycero-beta-D-manno-heptose 7-phosphate from sedoheptulose 7-phosphate: step 1/1. Its function is as follows. Catalyzes the isomerization of sedoheptulose 7-phosphate in D-glycero-D-manno-heptose 7-phosphate. This Shewanella frigidimarina (strain NCIMB 400) protein is Phosphoheptose isomerase.